We begin with the raw amino-acid sequence, 799 residues long: Lon protease 4 (799 aa).

A Lon N-terminal domain is found at 15-204 (FPLLPLRTGV…RVAGLLAEAS (190 aa)). Residue 356–363 (GPPGVGKT) coordinates ATP. The Lon proteolytic domain occupies 595–776 (TSVAGVATGL…SQVIAAALEE (182 aa)). Active-site residues include S682 and K725.

The protein belongs to the peptidase S16 family. In terms of assembly, homohexamer. Organized in a ring with a central cavity.

The protein localises to the cytoplasm. It carries out the reaction Hydrolysis of proteins in presence of ATP.. In terms of biological role, ATP-dependent serine protease that mediates the selective degradation of mutant and abnormal proteins as well as certain short-lived regulatory proteins. Required for cellular homeostasis and for survival from DNA damage and developmental changes induced by stress. Degrades polypeptides processively to yield small peptide fragments that are 5 to 10 amino acids long. Binds to DNA in a double-stranded, site-specific manner. The sequence is that of Lon protease 4 from Sorangium cellulosum (strain So ce56) (Polyangium cellulosum (strain So ce56)).